Here is a 233-residue protein sequence, read N- to C-terminus: MPCRREEEEEAGEEAEGEEEEDDSFLLLQQSVTLGSSGEVDRLVAQIGETLQLDAAQDSPASPCAPPGVPLRAPGPLAAAVPADKARPPAVPLLLPPASAETVGPAPSGALRCALGDRGRVRGRAAPYCVAEVAAGPSALPGPCRRGWLRDAVTSRRLQQRRWTQAGARAGDDDPHRLLQQLVLSGNLIKEAVRRLQRAVAAVAATGPASAPGPGGGRSGPDRIALQPSGSLL.

The disordered stretch occupies residues 1 to 24 (MPCRREEEEEAGEEAEGEEEEDDS). Residues 7–24 (EEEEAGEEAEGEEEEDDS) are compositionally biased toward acidic residues. The tract at residues 174–196 (DPHRLLQQLVLSGNLIKEAVRRL) is involved in GSK-3 binding. The disordered stretch occupies residues 204–233 (AATGPASAPGPGGGRSGPDRIALQPSGSLL).

It belongs to the GSK-3-binding protein family. Binds GSK-3 and prevents GSK-3-dependent phosphorylation.

In terms of biological role, positively regulates the Wnt signaling pathway by stabilizing beta-catenin through the association with GSK-3. The polypeptide is GSK-3-binding protein FRAT2 (FRAT2) (Homo sapiens (Human)).